The sequence spans 202 residues: N-(5'-phosphoribosyl)anthranilate isomerase (202 aa).

The protein belongs to the TrpF family.

The catalysed reaction is N-(5-phospho-beta-D-ribosyl)anthranilate = 1-(2-carboxyphenylamino)-1-deoxy-D-ribulose 5-phosphate. The protein operates within amino-acid biosynthesis; L-tryptophan biosynthesis; L-tryptophan from chorismate: step 3/5. In Listeria monocytogenes serovar 1/2a (strain ATCC BAA-679 / EGD-e), this protein is N-(5'-phosphoribosyl)anthranilate isomerase.